A 101-amino-acid chain; its full sequence is Cell cycle protein GpsB (101 aa).

Residues 34–71 (LDMVIKDYETFNQEIEKLQQENLHLSKQLEEAVEQGKR) adopt a coiled-coil conformation.

Belongs to the GpsB family. In terms of assembly, forms polymers through the coiled coil domains. Interacts with PBP1, MreC and EzrA.

The protein resides in the cytoplasm. Functionally, divisome component that associates with the complex late in its assembly, after the Z-ring is formed, and is dependent on DivIC and PBP2B for its recruitment to the divisome. Together with EzrA, is a key component of the system that regulates PBP1 localization during cell cycle progression. Its main role could be the removal of PBP1 from the cell pole after pole maturation is completed. Also contributes to the recruitment of PBP1 to the division complex. Not essential for septum formation. This Bacillus pumilus (strain SAFR-032) protein is Cell cycle protein GpsB.